We begin with the raw amino-acid sequence, 206 residues long: Large ribosomal subunit protein uL4 (206 aa).

Belongs to the universal ribosomal protein uL4 family. As to quaternary structure, part of the 50S ribosomal subunit.

One of the primary rRNA binding proteins, this protein initially binds near the 5'-end of the 23S rRNA. It is important during the early stages of 50S assembly. It makes multiple contacts with different domains of the 23S rRNA in the assembled 50S subunit and ribosome. Its function is as follows. Forms part of the polypeptide exit tunnel. In Nitrobacter winogradskyi (strain ATCC 25391 / DSM 10237 / CIP 104748 / NCIMB 11846 / Nb-255), this protein is Large ribosomal subunit protein uL4.